The primary structure comprises 211 residues: Protein-methionine-sulfoxide reductase heme-binding subunit MsrQ (211 aa).

A run of 5 helical transmembrane segments spans residues 10 to 30 (WLKV…VWAI), 82 to 102 (LWCF…ELGV), 116 to 136 (PYLT…FTST), 153 to 173 (FVYL…KIIS), and 178 to 198 (IYAG…LSLF).

It belongs to the MsrQ family. As to quaternary structure, heterodimer of a catalytic subunit (MsrP) and a heme-binding subunit (MsrQ). The cofactor is FMN. It depends on heme b as a cofactor.

It is found in the cell inner membrane. Its function is as follows. Part of the MsrPQ system that repairs oxidized periplasmic proteins containing methionine sulfoxide residues (Met-O), using respiratory chain electrons. Thus protects these proteins from oxidative-stress damage caused by reactive species of oxygen and chlorine generated by the host defense mechanisms. MsrPQ is essential for the maintenance of envelope integrity under bleach stress, rescuing a wide series of structurally unrelated periplasmic proteins from methionine oxidation, including the primary periplasmic chaperone SurA and the lipoprotein Pal. MsrQ provides electrons for reduction to the reductase catalytic subunit MsrP, using the quinone pool of the respiratory chain. This is Protein-methionine-sulfoxide reductase heme-binding subunit MsrQ from Escherichia coli (strain 55989 / EAEC).